Consider the following 368-residue polypeptide: Chaperone protein DnaJ (368 aa).

The 65-residue stretch at 5–69 folds into the J domain; sequence DYYEVLGVAR…NQRARYDQFG (65 aa). The CR-type zinc-finger motif lies at 125-207; that stretch reads GVEKVITIPV…CRGAGRVRKN (83 aa). 8 residues coordinate Zn(2+): C138, C141, C155, C158, C181, C184, C195, and C198. CXXCXGXG motif repeat units lie at residues 138–145, 155–162, 181–188, and 195–202; these read CGTCHGSG, CKRCGGSG, CSTCHGRG, and CETCRGAG.

It belongs to the DnaJ family. Homodimer. It depends on Zn(2+) as a cofactor.

The protein resides in the cytoplasm. Participates actively in the response to hyperosmotic and heat shock by preventing the aggregation of stress-denatured proteins and by disaggregating proteins, also in an autonomous, DnaK-independent fashion. Unfolded proteins bind initially to DnaJ; upon interaction with the DnaJ-bound protein, DnaK hydrolyzes its bound ATP, resulting in the formation of a stable complex. GrpE releases ADP from DnaK; ATP binding to DnaK triggers the release of the substrate protein, thus completing the reaction cycle. Several rounds of ATP-dependent interactions between DnaJ, DnaK and GrpE are required for fully efficient folding. Also involved, together with DnaK and GrpE, in the DNA replication of plasmids through activation of initiation proteins. This is Chaperone protein DnaJ from Exiguobacterium sibiricum (strain DSM 17290 / CCUG 55495 / CIP 109462 / JCM 13490 / 255-15).